The sequence spans 95 residues: Acylphosphatase (95 aa).

Residues 5–93 (RAHLFIRGKV…GEFQDFRILP (89 aa)) form the Acylphosphatase-like domain. Catalysis depends on residues arginine 20 and asparagine 38.

It belongs to the acylphosphatase family.

It catalyses the reaction an acyl phosphate + H2O = a carboxylate + phosphate + H(+). This Pyrobaculum arsenaticum (strain DSM 13514 / JCM 11321 / PZ6) protein is Acylphosphatase (acyP).